The chain runs to 757 residues: Polyribonucleotide nucleotidyltransferase (757 aa).

Residues Asp-488 and Asp-494 each contribute to the Mg(2+) site. Residues 555–614 (PKLYTMKINAEKIRDVIGKGGAVIRALTEETGCQINIEEDGTITIAATDAAKADIAKRRI) form the KH domain. One can recognise an S1 motif domain in the interval 624–692 (GKIYEGPVTK…ERGRVKLSMK (69 aa)). Residues 693 to 757 (VLAERPAPGS…ADTGSGQRVG (65 aa)) are disordered. Positions 720 to 736 (ALAEREPRREMRDHGHP) are enriched in basic and acidic residues. Positions 737–747 (PSEQQQQQSPP) are enriched in low complexity.

This sequence belongs to the polyribonucleotide nucleotidyltransferase family. The cofactor is Mg(2+).

The protein localises to the cytoplasm. It carries out the reaction RNA(n+1) + phosphate = RNA(n) + a ribonucleoside 5'-diphosphate. Its function is as follows. Involved in mRNA degradation. Catalyzes the phosphorolysis of single-stranded polyribonucleotides processively in the 3'- to 5'-direction. This chain is Polyribonucleotide nucleotidyltransferase, found in Verminephrobacter eiseniae (strain EF01-2).